The following is a 305-amino-acid chain: J domain-containing protein 1 (305 aa).

Positions 91–163 constitute a J domain; sequence TPYEVLGLVK…SRRRMYDMYA (73 aa). Residues 212–232 traverse the membrane as a helical segment; it reads WGMVVWALCMLAGFQVMAFLI.

Belongs to the DnaJ family.

Its subcellular location is the mitochondrion membrane. Functionally, probable chaperone. The sequence is that of J domain-containing protein 1 (JID1) from Eremothecium gossypii (strain ATCC 10895 / CBS 109.51 / FGSC 9923 / NRRL Y-1056) (Yeast).